Consider the following 56-residue polypeptide: Single-pass membrane and coiled-coil domain-containing protein 4 homolog (56 aa).

The tract at residues 1–27 (MRQLPGKAAKETRKMKRERKQQNKEGH) is disordered. The stretch at 9-31 (AKETRKMKRERKQQNKEGHNRVV) forms a coiled coil. Residues 30–50 (VVTVAIPVCLAVFVMLIVYVY) traverse the membrane as a helical segment.

It belongs to the SMCO4 family.

It is found in the membrane. In Nematostella vectensis (Starlet sea anemone), this protein is Single-pass membrane and coiled-coil domain-containing protein 4 homolog.